The sequence spans 568 residues: Sphingosine-1-phosphate lyase 1 (568 aa).

At 1–40 (MPSTDLLMLKAFEPYLEILEVYSTKAKNYVNGHCTKYEPW) the chain is on the lumenal side. Residues 41–61 (QLIAWSVVWTLLIVWGYEFVF) form a helical; Signal-anchor for type III membrane protein membrane-spanning segment. Topologically, residues 62–568 (QPESLWSRFK…SQMNGSPKPH (507 aa)) are cytoplasmic. K353 is modified (N6-(pyridoxal phosphate)lysine; alternate). Residue K353 is modified to N6-acetyllysine; alternate. 2 positions are modified to 3'-nitrotyrosine: Y356 and Y366. S564 bears the Phosphoserine mark.

Belongs to the group II decarboxylase family. Sphingosine-1-phosphate lyase subfamily. In terms of assembly, homodimer. Pyridoxal 5'-phosphate is required as a cofactor. Ubiquitously expressed. Expressed in fetal and adult adrenal gland (at protein level).

It is found in the endoplasmic reticulum membrane. The enzyme catalyses sphinganine 1-phosphate = hexadecanal + phosphoethanolamine. The catalysed reaction is sphing-4-enine 1-phosphate = (2E)-hexadecenal + phosphoethanolamine. It participates in lipid metabolism; sphingolipid metabolism. In terms of biological role, cleaves phosphorylated sphingoid bases (PSBs), such as sphingosine-1-phosphate, into fatty aldehydes and phosphoethanolamine. Elevates stress-induced ceramide production and apoptosis. Required for global lipid homeostasis in liver and cholesterol homeostasis in fibroblasts. Involved in the regulation of pro-inflammatory response and neutrophil trafficking. Modulates neuronal autophagy via phosphoethanolamine production which regulates accumulation of aggregate-prone proteins such as APP. Seems to play a role in establishing neuronal contact sites and axonal maintenance. This Homo sapiens (Human) protein is Sphingosine-1-phosphate lyase 1.